Consider the following 305-residue polypeptide: MSSTQFNKGPSYGLSAEVKNRLLSKYDPQKEAELRSWIEGLTGLSIGPDFQKGLKDGVILCTLMNKLQPGSVPKINRSMQNWHQLENLSNFIKAMVSYGMNPVDLFEANDLFESGNMTQVQVSLLALAGKAKTKGLQSGVDIGVKYSEKQERNFDDATMKAGQCVIGLQMGTNKCASQSGMTAYGTRRHLYDPKNHILPPMDHCTISLQMGTNKCASQVGMTAPGTRRHIYDTKLGTDKCDNSSMSLQMGYTQGANQSGQVFGLGRQIYDPKYCPQGSAADGAPAGDGQGEAPEYLAYCQEEAGY.

Serine 2 carries the N-acetylserine modification. N6-acetyllysine occurs at positions 8 and 25. The Calponin-homology (CH) domain occupies 28–132 (PQKEAELRSW…SLLALAGKAK (105 aa)). The residue at position 138 (serine 138) is a Phosphoserine. Calponin-like repeat units follow at residues 166–191 (IGLQ…RHLY), 206–231 (ISLQ…RHIY), and 245–269 (MSLQ…RQIY).

Belongs to the calponin family. Smooth muscle, and tissues containing significant amounts of smooth muscle.

Its function is as follows. Thin filament-associated protein that is implicated in the regulation and modulation of smooth muscle contraction. It is capable of binding to actin, calmodulin and tropomyosin. The interaction of calponin with actin inhibits the actomyosin Mg-ATPase activity. The polypeptide is Calponin-2 (Cnn2) (Mus musculus (Mouse)).